A 347-amino-acid polypeptide reads, in one-letter code: N-acetyl-gamma-glutamyl-phosphate reductase (347 aa).

The active site involves C150.

Belongs to the NAGSA dehydrogenase family. Type 1 subfamily.

Its subcellular location is the cytoplasm. The enzyme catalyses N-acetyl-L-glutamate 5-semialdehyde + phosphate + NADP(+) = N-acetyl-L-glutamyl 5-phosphate + NADPH + H(+). Its pathway is amino-acid biosynthesis; L-arginine biosynthesis; N(2)-acetyl-L-ornithine from L-glutamate: step 3/4. In terms of biological role, catalyzes the NADPH-dependent reduction of N-acetyl-5-glutamyl phosphate to yield N-acetyl-L-glutamate 5-semialdehyde. The chain is N-acetyl-gamma-glutamyl-phosphate reductase from Leifsonia xyli subsp. xyli (strain CTCB07).